Consider the following 147-residue polypeptide: Antiholin-like protein LrgA (147 aa).

The next 4 membrane-spanning stretches (helical) occupy residues Pro12–Ile32, Phe35–Cys55, Asn74–Ser94, and Phe98–Val118.

This sequence belongs to the CidA/LrgA family. LrgA subfamily.

The protein localises to the cell membrane. In terms of biological role, inhibits the expression or activity of extracellular murein hydrolases by interacting, possibly with LrgB, with the holin-like proteins CidA and/or CidB. The LrgAB and CidAB proteins may affect the proton motive force of the membrane. May be involved in programmed cell death (PCD), possibly triggering PCD in response to antibiotics and environmental stresses. In Staphylococcus aureus (strain MSSA476), this protein is Antiholin-like protein LrgA.